Reading from the N-terminus, the 783-residue chain is BMP/retinoic acid-inducible neural-specific protein 2 (783 aa).

An N-terminal signal peptide occupies residues 1-33 (MRWPCSSWFRGLWPEAAPWAVLLALGVPGWVLA). In terms of domain architecture, MACPF spans 85 to 281 (RYRIYREFAR…FVAAALSYIT (197 aa)). Residues asparagine 185, asparagine 354, asparagine 473, asparagine 579, asparagine 626, and asparagine 658 are each glycosylated (N-linked (GlcNAc...) asparagine).

It belongs to the BRINP family. Weakly expressed in embryonic stem (ES) cells. Strongly expressed in ES-derived neural stem cells (NSCs).

The protein localises to the secreted. In terms of biological role, inhibits neuronal cell proliferation by negative regulation of the cell cycle transition. This chain is BMP/retinoic acid-inducible neural-specific protein 2 (Brinp2), found in Mus musculus (Mouse).